A 481-amino-acid chain; its full sequence is MNILRRGRLGSSVKEDVMKFTTSLEFDKEIFQSDILCDIAHTTMLMEQKIVSIEFGEKVIEELKKIAKVGMDSLNLDPSLDDIHMVIESELIKKLGEDVAGRMHTGRSRNDEVATDLRLSLRKKVLEIVKLLIDMEENMLSLAKEHSETITVGYTHLQQAQPVTFGHQILSHVSAVERDISRFFDAYNRINISPLGCGAMATTGFNIDRKRTMELLGFYELIENSMDGVSSRDFIVETMANISMLGTNLSKICEELILFSTAEFKTVEIADEYTSTSSIMPQKKNPDVAEIARAKLSTLNGNLITVLTIMKALPNTYNRDLQEISPHLWKSTYTIIDCIKMIDGMVSTIKVNKERMKENAEKNYATATELADTLVRECNIAFRMAHGIVGELVRTSIEEKVEIKDIILDVFKANGLHLSKEKIDSALDPYENVKLRDVIGGPAPKEVERAVLSFKNKMELHSKNLNDKMRSIEAVEENLLN.

This sequence belongs to the lyase 1 family. Argininosuccinate lyase subfamily.

It localises to the cytoplasm. It catalyses the reaction 2-(N(omega)-L-arginino)succinate = fumarate + L-arginine. It participates in amino-acid biosynthesis; L-arginine biosynthesis; L-arginine from L-ornithine and carbamoyl phosphate: step 3/3. This chain is Argininosuccinate lyase, found in Methanococcus vannielii (strain ATCC 35089 / DSM 1224 / JCM 13029 / OCM 148 / SB).